Reading from the N-terminus, the 524-residue chain is Bifunctional purine biosynthesis protein PurH (524 aa).

One can recognise an MGS-like domain in the interval 1 to 144; the sequence is MTRRALVSVS…KNSAHVGVVV (144 aa).

The protein belongs to the PurH family.

It carries out the reaction (6R)-10-formyltetrahydrofolate + 5-amino-1-(5-phospho-beta-D-ribosyl)imidazole-4-carboxamide = 5-formamido-1-(5-phospho-D-ribosyl)imidazole-4-carboxamide + (6S)-5,6,7,8-tetrahydrofolate. The catalysed reaction is IMP + H2O = 5-formamido-1-(5-phospho-D-ribosyl)imidazole-4-carboxamide. The protein operates within purine metabolism; IMP biosynthesis via de novo pathway; 5-formamido-1-(5-phospho-D-ribosyl)imidazole-4-carboxamide from 5-amino-1-(5-phospho-D-ribosyl)imidazole-4-carboxamide (10-formyl THF route): step 1/1. It participates in purine metabolism; IMP biosynthesis via de novo pathway; IMP from 5-formamido-1-(5-phospho-D-ribosyl)imidazole-4-carboxamide: step 1/1. This chain is Bifunctional purine biosynthesis protein PurH, found in Anaeromyxobacter dehalogenans (strain 2CP-C).